The following is a 433-amino-acid chain: 3-phosphoshikimate 1-carboxyvinyltransferase (433 aa).

Positions 21, 22, and 26 each coordinate 3-phosphoshikimate. Lys21 contributes to the phosphoenolpyruvate binding site. Residues Gly92 and Arg120 each coordinate phosphoenolpyruvate. Residues Ser166, Gln168, Asp317, and Lys344 each contribute to the 3-phosphoshikimate site. Gln168 is a binding site for phosphoenolpyruvate. Catalysis depends on Asp317, which acts as the Proton acceptor. Arg348 and Arg391 together coordinate phosphoenolpyruvate.

It belongs to the EPSP synthase family. As to quaternary structure, monomer.

It is found in the cytoplasm. The enzyme catalyses 3-phosphoshikimate + phosphoenolpyruvate = 5-O-(1-carboxyvinyl)-3-phosphoshikimate + phosphate. It participates in metabolic intermediate biosynthesis; chorismate biosynthesis; chorismate from D-erythrose 4-phosphate and phosphoenolpyruvate: step 6/7. Catalyzes the transfer of the enolpyruvyl moiety of phosphoenolpyruvate (PEP) to the 5-hydroxyl of shikimate-3-phosphate (S3P) to produce enolpyruvyl shikimate-3-phosphate and inorganic phosphate. The polypeptide is 3-phosphoshikimate 1-carboxyvinyltransferase (Caldicellulosiruptor bescii (strain ATCC BAA-1888 / DSM 6725 / KCTC 15123 / Z-1320) (Anaerocellum thermophilum)).